The chain runs to 271 residues: Type III pantothenate kinase (271 aa).

6–13 (DVRNTHTV) serves as a coordination point for ATP. 109-112 (GADR) serves as a coordination point for substrate. Aspartate 111 functions as the Proton acceptor in the catalytic mechanism. Aspartate 131 lines the K(+) pocket. Serine 134 contacts ATP. Threonine 186 is a substrate binding site.

It belongs to the type III pantothenate kinase family. As to quaternary structure, homodimer. NH4(+) serves as cofactor. Requires K(+) as cofactor.

The protein localises to the cytoplasm. The catalysed reaction is (R)-pantothenate + ATP = (R)-4'-phosphopantothenate + ADP + H(+). It participates in cofactor biosynthesis; coenzyme A biosynthesis; CoA from (R)-pantothenate: step 1/5. Its function is as follows. Catalyzes the phosphorylation of pantothenate (Pan), the first step in CoA biosynthesis. The polypeptide is Type III pantothenate kinase (Mycobacteroides abscessus (strain ATCC 19977 / DSM 44196 / CCUG 20993 / CIP 104536 / JCM 13569 / NCTC 13031 / TMC 1543 / L948) (Mycobacterium abscessus)).